Here is a 125-residue protein sequence, read N- to C-terminus: Evasin P672 (125 aa).

The signal sequence occupies residues 1 to 21; sequence MAHKIAIGLVCVLYALHIMSA. 8 N-linked (GlcNAc...) asparagine glycosylation sites follow: N35, N55, N65, N72, N78, N104, N112, and N118. 3 disulfide bridges follow: C70–C110, C87–C115, and C105–C124.

The protein localises to the secreted. In terms of biological role, salivary chemokine-binding protein which has chemokine-neutralizing activity and binds to host chemokines CCL1, CCL2, CCL3, CCL3L1, CCL7, CCL8, CCL11, CCL12, CCL13, CCL14, CCL15, CCL16, CCL18 and CCL23. Binds to CCL8 with 1:1 stoichiometry and disrupts CCL8 homodimer formation. In Rhipicephalus pulchellus (Yellow backed tick), this protein is Evasin P672.